Consider the following 370-residue polypeptide: Phenylalanine dehydrogenase (370 aa).

An NAD(+)-binding site is contributed by Arg44. Lys68 serves as a coordination point for L-phenylalanine. Lys80 acts as the Proton donor/acceptor in catalysis. 114 to 115 (TD) is a binding site for L-phenylalanine. NAD(+)-binding positions include Asp115, Ser146, Thr150, 180–186 (GLGKVGF), 203–204 (DV), 243–244 (AI), and 264–266 (AAN). Position 266 (Asn266) interacts with L-phenylalanine.

This sequence belongs to the Glu/Leu/Phe/Val dehydrogenases family.

The catalysed reaction is L-phenylalanine + NAD(+) + H2O = 3-phenylpyruvate + NH4(+) + NADH + H(+). It functions in the pathway amino-acid biosynthesis; L-phenylalanine biosynthesis; L-phenylalanine from phenylpyruvate (PDH route): step 1/1. Catalyzes the reversible NAD(+)-dependent oxidative deamination of L-phenylalanine to phenylpyruvate. This is Phenylalanine dehydrogenase from Caldalkalibacillus thermarum (strain TA2.A1).